The sequence spans 242 residues: tRNA (guanine-N(1)-)-methyltransferase (242 aa).

Residues Gly-111 and Ile-130–Leu-135 contribute to the S-adenosyl-L-methionine site.

This sequence belongs to the RNA methyltransferase TrmD family. Homodimer.

Its subcellular location is the cytoplasm. It carries out the reaction guanosine(37) in tRNA + S-adenosyl-L-methionine = N(1)-methylguanosine(37) in tRNA + S-adenosyl-L-homocysteine + H(+). Functionally, specifically methylates guanosine-37 in various tRNAs. The chain is tRNA (guanine-N(1)-)-methyltransferase from Onion yellows phytoplasma (strain OY-M).